The sequence spans 171 residues: MDGSAHLRDPPGPAVLRWRLEDMHIIPGTSGSLALRICQFSAAIVSFSVMISAANFSSVTAFCFLVAAMVLQCMWSLSVATIEGYAMLVGRSLRDSPLLSLFAVGDWVTAVITFAGACASAGIAVLVGRDIHRGCDVNFCGRYAAAAGMAFLSWLLISTSFLFTFWLLATR.

Over 1 to 39 the chain is Cytoplasmic; sequence MDGSAHLRDPPGPAVLRWRLEDMHIIPGTSGSLALRICQ. A helical transmembrane segment spans residues 40–60; that stretch reads FSAAIVSFSVMISAANFSSVT. A topological domain (extracellular) is located at residue Ala-61. Residues 62 to 82 traverse the membrane as a helical segment; the sequence is FCFLVAAMVLQCMWSLSVATI. Residues 83 to 106 lie on the Cytoplasmic side of the membrane; the sequence is EGYAMLVGRSLRDSPLLSLFAVGD. Residues 107–127 form a helical membrane-spanning segment; that stretch reads WVTAVITFAGACASAGIAVLV. Residues 128 to 148 are Extracellular-facing; it reads GRDIHRGCDVNFCGRYAAAAG. The helical transmembrane segment at 149–169 threads the bilayer; sequence MAFLSWLLISTSFLFTFWLLA. The Cytoplasmic portion of the chain corresponds to 170-171; that stretch reads TR.

This sequence belongs to the Casparian strip membrane proteins (CASP) family. Homodimer and heterodimers.

It is found in the cell membrane. This is CASP-like protein 5A2 from Pteridium aquilinum subsp. aquilinum (Bracken fern).